A 204-amino-acid polypeptide reads, in one-letter code: Rho GDP-dissociation inhibitor 1 (204 aa).

The disordered stretch occupies residues 1–36 (MAEQEPTAEQLAQIAAENEEDEHSVNYKPPAQKSIQ). At Ala-2 the chain carries N-acetylalanine. Ser-34 is modified (phosphoserine). N6-acetyllysine is present on Lys-43. Ser-47 is subject to Phosphoserine. N6-acetyllysine is present on residues Lys-105 and Lys-127. Glycyl lysine isopeptide (Lys-Gly) (interchain with G-Cter in SUMO1); alternate cross-links involve residues Lys-138 and Lys-141. Residues Lys-138 and Lys-141 each participate in a glycyl lysine isopeptide (Lys-Gly) (interchain with G-Cter in SUMO2); alternate cross-link. An N6-acetyllysine; alternate modification is found at Lys-141. Lys-141 is modified (N6-succinyllysine; alternate). Lys-178 carries the N6-acetyllysine modification.

This sequence belongs to the Rho GDI family. In terms of assembly, monomer. Interacts with FER. Interacts with PLXNB3. Forms a heterodimer with RAC1. Interacts with RHOA, the affinity is increased by three orders of magnitude when RHOA is prenylated. Interacts with PSMD10; the interaction increases ARHGDIA association with RHOA, leading to ARHGDIA-mediated inactivation of RHOA and ROCK and prolonged AKT activation. Interacts with KANK2; the interaction is direct and may regulate the interaction of ARHGDIA with RHOA, RAC1 and CDC42. Interacts with RHOC. Interacts with CDC42. Interacts with NGFR (via death domain); NGFR binding decreases the affinity for RHOA.

Its subcellular location is the cytoplasm. Functionally, controls Rho proteins homeostasis. Regulates the GDP/GTP exchange reaction of the Rho proteins by inhibiting the dissociation of GDP from them, and the subsequent binding of GTP to them. Retains Rho proteins such as CDC42, RAC1 and RHOA in an inactive cytosolic pool, regulating their stability and protecting them from degradation. Actively involved in the recycling and distribution of activated Rho GTPases in the cell, mediates extraction from membranes of both inactive and activated molecules due its exceptionally high affinity for prenylated forms. Through the modulation of Rho proteins, may play a role in cell motility regulation. In glioma cells, inhibits cell migration and invasion by mediating the signals of SEMA5A and PLXNB3 that lead to inactivation of RAC1. In Homo sapiens (Human), this protein is Rho GDP-dissociation inhibitor 1 (ARHGDIA).